The following is a 139-amino-acid chain: Histone H2AX (139 aa).

The tract at residues 1 to 24 is disordered; that stretch reads MSSTATTKGGRGKPKASKSVSRSS. A Phosphoserine; by ATM and ATR modification is found at serine 136. A [ST]-Q motif motif is present at residues 136–137; the sequence is SQ.

The protein belongs to the histone H2A family. As to quaternary structure, the nucleosome is a histone octamer containing two molecules each of H2A, H2B, H3 and H4 assembled in one H3-H4 heterotetramer and two H2A-H2B heterodimers. The octamer wraps approximately 147 bp of DNA. Interacts with numerous proteins required for DNA damage signaling and repair when phosphorylated on Ser-136. Post-translationally, phosphorylated on Ser-136 (to form gamma-H2AX) in response to DNA double strand breaks (DSBs) generated by exogenous genotoxic agents and by stalled replication forks, and may also occur during meiotic recombination events. Phosphorylation can extend up to several thousand nucleosomes from the actual site of the DSB and may mark the surrounding chromatin for recruitment of proteins required for DNA damage signaling and repair. Widespread phosphorylation may also serve to amplify the damage signal or aid repair of persistent lesions. Phosphorylation of Ser-136 in response to ionizing radiation is mediated by ATM while defects in DNA replication induce Ser-136 phosphorylation subsequent to activation of ATR. Dephosphorylation of Ser-136 by PP2A is required for DNA DSB repair.

It localises to the nucleus. Its subcellular location is the chromosome. Its function is as follows. Variant histone H2A which replaces conventional H2A in a subset of nucleosomes. Nucleosomes wrap and compact DNA into chromatin, limiting DNA accessibility to the cellular machineries which require DNA as a template. Histones thereby play a central role in transcription regulation, DNA repair, DNA replication and chromosomal stability. DNA accessibility is regulated via a complex set of post-translational modifications of histones, also called histone code, and nucleosome remodeling. Required for checkpoint-mediated arrest of cell cycle progression in response to low doses of ionizing radiation and for efficient repair of DNA double strand breaks (DSBs) specifically when modified by C-terminal phosphorylation. The chain is Histone H2AX (HIS2A) from Cicer arietinum (Chickpea).